The primary structure comprises 347 residues: Phosphate acyltransferase (347 aa).

The protein belongs to the PlsX family. In terms of assembly, homodimer. Probably interacts with PlsY.

The protein localises to the cytoplasm. It catalyses the reaction a fatty acyl-[ACP] + phosphate = an acyl phosphate + holo-[ACP]. Its pathway is lipid metabolism; phospholipid metabolism. In terms of biological role, catalyzes the reversible formation of acyl-phosphate (acyl-PO(4)) from acyl-[acyl-carrier-protein] (acyl-ACP). This enzyme utilizes acyl-ACP as fatty acyl donor, but not acyl-CoA. This chain is Phosphate acyltransferase, found in Rhizobium meliloti (strain 1021) (Ensifer meliloti).